The primary structure comprises 469 residues: MTSQLAKKGEAWSARFSEPMSDLVKRYTASVFFDKRLALFDIQGSLAHAAMLAKQGIIAEADRAEIERGMTQIRGEIESGAFEWKLDLEDVHLNIEARLTALVGDAGKRLHTGRSRNDQVATDIRLWLRSEIDSIVGLLGDLRGALLDLAEKNADTILPGFTHLQVAQPVTFGHHLMAYVEMFTRDAERMADCRRRVNRLPLGAAALAGTSYPIDREFVATQLGFDGVCRNSLDAVSDRDFAIEFLAAASLIMTHVSRFSEELVIWMSPRVGFIDIADRFCTGSSIMPQKKNPDVPELARGKTGRVYGHLTGLLTLMKGQPLAYNKDNQEDKEPLFDTVDTVVDTLRIFADMVPGISVKPDNMRAAALQGYATATDLADYLVKRGLPFRDAHEAVAHAVRACDDRHCDLADLTVEQLREVSGLGDKASLIGDDVHSVLTLEGSVASRNHIGGTAPDQVRAAIAAARKAL.

This sequence belongs to the lyase 1 family. Argininosuccinate lyase subfamily.

The protein localises to the cytoplasm. It catalyses the reaction 2-(N(omega)-L-arginino)succinate = fumarate + L-arginine. It functions in the pathway amino-acid biosynthesis; L-arginine biosynthesis; L-arginine from L-ornithine and carbamoyl phosphate: step 3/3. The chain is Argininosuccinate lyase from Cupriavidus metallidurans (strain ATCC 43123 / DSM 2839 / NBRC 102507 / CH34) (Ralstonia metallidurans).